Reading from the N-terminus, the 183-residue chain is uncharacterized protein (183 aa).

It belongs to the chlamydial CPn_0803/CT_584/TC_0873 family.

This is an uncharacterized protein from Chlamydia muridarum (strain MoPn / Nigg).